A 1065-amino-acid polypeptide reads, in one-letter code: Carbamoyl phosphate synthase large chain (1065 aa).

A carboxyphosphate synthetic domain region spans residues 1–401 (MPKRTDIETI…AMLKAVRSLE (401 aa)). ATP-binding residues include R129, R169, G175, G176, K208, I210, E215, G241, I242, H243, Q284, and E298. An ATP-grasp 1 domain is found at 133 to 327 (RNLMYELGAP…IAKLAAKIAV (195 aa)). Residues Q284, E298, and N300 each contribute to the Mg(2+) site. Residues Q284, E298, and N300 each coordinate Mn(2+). Positions 402-546 (TGQVHLELKH…YGTYEEENES (145 aa)) are oligomerization domain. The interval 547 to 929 (IKSEKPSVVV…ALYKGLVAAG (383 aa)) is carbamoyl phosphate synthetic domain. Residues 671 to 861 (EQALRDLNIP…MANIATKAIL (191 aa)) enclose the ATP-grasp 2 domain. ATP is bound by residues R707, R746, L748, E752, G777, V778, H779, S780, Q820, and E832. Residues Q820, E832, and N834 each contribute to the Mg(2+) site. Positions 820, 832, and 834 each coordinate Mn(2+). Positions 930–1065 (MEIRTEGTVL…EEMPKAEVVH (136 aa)) constitute an MGS-like domain. Residues 930–1065 (MEIRTEGTVL…EEMPKAEVVH (136 aa)) form an allosteric domain region.

The protein belongs to the CarB family. As to quaternary structure, composed of two chains; the small (or glutamine) chain promotes the hydrolysis of glutamine to ammonia, which is used by the large (or ammonia) chain to synthesize carbamoyl phosphate. Tetramer of heterodimers (alpha,beta)4. The cofactor is Mg(2+). Requires Mn(2+) as cofactor.

The enzyme catalyses hydrogencarbonate + L-glutamine + 2 ATP + H2O = carbamoyl phosphate + L-glutamate + 2 ADP + phosphate + 2 H(+). The catalysed reaction is hydrogencarbonate + NH4(+) + 2 ATP = carbamoyl phosphate + 2 ADP + phosphate + 2 H(+). It functions in the pathway amino-acid biosynthesis; L-arginine biosynthesis; carbamoyl phosphate from bicarbonate: step 1/1. The protein operates within pyrimidine metabolism; UMP biosynthesis via de novo pathway; (S)-dihydroorotate from bicarbonate: step 1/3. In terms of biological role, large subunit of the glutamine-dependent carbamoyl phosphate synthetase (CPSase). CPSase catalyzes the formation of carbamoyl phosphate from the ammonia moiety of glutamine, carbonate, and phosphate donated by ATP, constituting the first step of 2 biosynthetic pathways, one leading to arginine and/or urea and the other to pyrimidine nucleotides. The large subunit (synthetase) binds the substrates ammonia (free or transferred from glutamine from the small subunit), hydrogencarbonate and ATP and carries out an ATP-coupled ligase reaction, activating hydrogencarbonate by forming carboxy phosphate which reacts with ammonia to form carbamoyl phosphate. The polypeptide is Carbamoyl phosphate synthase large chain (Lysinibacillus sphaericus (strain C3-41)).